A 106-amino-acid polypeptide reads, in one-letter code: uncharacterized protein (106 aa).

Positions 1-23 are disordered; it reads MASGAPPLTQKTPSHARRKERRR. The segment covering 14 to 23 has biased composition (basic residues); that stretch reads SHARRKERRR.

This is an uncharacterized protein from Treponema pallidum (strain Nichols).